The primary structure comprises 276 residues: Insulin-like growth factor-binding protein 2-A (276 aa).

Positions 1-22 (MLSYVSCGLLLALVTFHGTARS) are cleaved as a signal peptide. One can recognise an IGFBP N-terminal domain in the interval 24-105 (MVFRCPSCTA…VQGLGRCGRK (82 aa)). Disulfide bonds link Cys-28-Cys-55, Cys-31-Cys-57, Cys-39-Cys-58, Cys-46-Cys-61, Cys-69-Cys-82, Cys-76-Cys-102, Cys-180-Cys-214, Cys-225-Cys-236, and Cys-238-Cys-259. The Thyroglobulin type-1 domain maps to 177 to 259 (QSQCQQELDQ…SPLIRGDPNC (83 aa)). The short motif at 254–256 (RGD) is the Cell attachment site element.

Interacts equally well with igf1 and igf2. In terms of tissue distribution, in embryos at 24 hpf, initially expressed in the lens and cranial region, and at 48 and 72 hpf in the brain boundary vasculature. Expression in these regions persists throughout the hatching period and by 96 hpf expression is most abundant in the liver. In both male and female adults, highest expression is in the liver with modest expression in the brain. In male but not females adults, expressed at a low level in muscle and gonad. Also expressed in the adult intestine.

Its subcellular location is the secreted. Its function is as follows. IGF-binding proteins prolong the half-life of the IGFs and have been shown to either inhibit or stimulate the growth promoting effects of the IGFs on cell culture. They alter the interaction of IGFs with their cell surface receptors. The chain is Insulin-like growth factor-binding protein 2-A (igfbp2a) from Danio rerio (Zebrafish).